Reading from the N-terminus, the 212-residue chain is ATP-dependent dethiobiotin synthetase BioD (212 aa).

13–18 lines the ATP pocket; the sequence is GIGKTV. Threonine 17 is a binding site for Mg(2+). The active site involves lysine 33. Serine 37 contributes to the substrate binding site. Mg(2+) is bound at residue glutamate 100. Residues 100–103 and 184–186 each bind ATP; these read EGAG and PLL.

The protein belongs to the dethiobiotin synthetase family. In terms of assembly, homodimer. Mg(2+) serves as cofactor.

Its subcellular location is the cytoplasm. The catalysed reaction is (7R,8S)-7,8-diammoniononanoate + CO2 + ATP = (4R,5S)-dethiobiotin + ADP + phosphate + 3 H(+). It participates in cofactor biosynthesis; biotin biosynthesis; biotin from 7,8-diaminononanoate: step 1/2. Functionally, catalyzes a mechanistically unusual reaction, the ATP-dependent insertion of CO2 between the N7 and N8 nitrogen atoms of 7,8-diaminopelargonic acid (DAPA, also called 7,8-diammoniononanoate) to form a ureido ring. This chain is ATP-dependent dethiobiotin synthetase BioD, found in Brucella canis (strain ATCC 23365 / NCTC 10854 / RM-666).